A 495-amino-acid chain; its full sequence is Probable aspartic-type endopeptidase OPSB (495 aa).

Positions 1-19 (MRGDSFIWSLATAIPLLST) are cleaved as a signal peptide. Positions 73 to 408 (YFCNLTLGTP…DLDNNEISIA (336 aa)) constitute a Peptidase A1 domain. An N-linked (GlcNAc...) asparagine glycan is attached at asparagine 76. Residue aspartate 91 is part of the active site. Asparagine 136 is a glycosylation site (N-linked (GlcNAc...) asparagine). Aspartate 290 is a catalytic residue. A glycan (N-linked (GlcNAc...) asparagine) is linked at asparagine 413. A disordered region spans residues 447-470 (ATGLPGVETGVPGSRPPSSKAAGQ). Alanine 467 is lipidated: GPI-anchor amidated alanine. Residues 468-495 (AGQAKRPDFVLGVAAVGLAGAGMLFAAM) constitute a propeptide, removed in mature form.

Belongs to the peptidase A1 family.

It localises to the cell membrane. Probable GPI-anchored aspartic-type endopeptidase which contributes to virulence. This Arthroderma benhamiae (strain ATCC MYA-4681 / CBS 112371) (Trichophyton mentagrophytes) protein is Probable aspartic-type endopeptidase OPSB (OPSB).